The primary structure comprises 113 residues: Large ribosomal subunit protein bL19 (113 aa).

This sequence belongs to the bacterial ribosomal protein bL19 family.

In terms of biological role, this protein is located at the 30S-50S ribosomal subunit interface and may play a role in the structure and function of the aminoacyl-tRNA binding site. This is Large ribosomal subunit protein bL19 from Mycobacterium sp. (strain JLS).